A 235-amino-acid chain; its full sequence is Germin-like protein 1-4 (235 aa).

The N-terminal stretch at 1 to 27 (MAAKLPTVVLLASFAAVILSLAAPLLA) is a signal peptide. Cysteine 37 and cysteine 55 form a disulfide bridge. Asparagine 60 carries an N-linked (GlcNAc...) asparagine glycan. A Cupin type-1 domain is found at 69-226 (PGLGKPADVY…AFQVDGGVVE (158 aa)). Residues histidine 120, histidine 122, glutamate 127, and histidine 171 each coordinate Mn(2+).

It belongs to the germin family. As to quaternary structure, oligomer (believed to be a pentamer but probably hexamer).

The protein resides in the secreted. The protein localises to the extracellular space. It is found in the apoplast. Functionally, may play a role in plant defense. Probably has no oxalate oxidase activity even if the active site is conserved. This is Germin-like protein 1-4 from Oryza sativa subsp. japonica (Rice).